The following is a 158-amino-acid chain: Ribosome association toxin RatA (158 aa).

The protein belongs to the ribosome association toxin RatA family. Associates with 50S ribosomes.

Its function is as follows. Toxic component of a type II toxin-antitoxin (TA) system. Binds to 50S ribosomal subunits, preventing them from associating with 30S subunits to form 70S ribosomes and reducing polysomes. It does not cause ribosomes to dissociate however. The antibiotic paromomycin blocks the anti-association activity of RatA. Overexpression results in inhibition of growth in liquid cultures, and in a decrease in protein translation. The other gene of this operon, ratB, is not the cognate antitoxin in this strain; in CFT073 however it does fulfill this function. Low level expression in a deletion mutant increases resistance to acidified sodium nitrate which causes nitrosative stress. This is Ribosome association toxin RatA (ratA) from Escherichia coli (strain K12).